Reading from the N-terminus, the 362-residue chain is MEKIIIKLEKRSYPIIIADKLFNDFLPFWPLNIDDKVVLITNDRVAPIYLNILRNLLIRSGIVTDQLILPDGEQNKSLITLDTIFTKLLKKNYDRSTILIGLGGGVIGDITGFAAATYQRGIRFIQVPTTLLAQVDASIGGKTGINHILGKNMIGAFHQPIAVIINLDVLHTLSMKEFSSGLAEIIKYAIALDSSFFGWLESHLDDLLILHLPSLMYCIRRCCELKASIIAIDERDQGIRSVLNLGHTYGHAIESYLGYSQWSHGESIAAGIMMAVNTALRLNQFNCSDAKRIKLLLTRAGLPVRGPKEMTSKNYLEYMKRDKKSISGQLNLVLPTSTIGNVKTVFNVNHELVSLSIEDTNN.

Residues 71-76 (DGEQNK), 105-109 (GVIGD), 129-130 (TT), lysine 142, and lysine 151 each bind NAD(+). Glutamate 184, histidine 247, and histidine 264 together coordinate Zn(2+).

Belongs to the sugar phosphate cyclases superfamily. Dehydroquinate synthase family. Requires Co(2+) as cofactor. Zn(2+) is required as a cofactor. It depends on NAD(+) as a cofactor.

Its subcellular location is the cytoplasm. The catalysed reaction is 7-phospho-2-dehydro-3-deoxy-D-arabino-heptonate = 3-dehydroquinate + phosphate. It participates in metabolic intermediate biosynthesis; chorismate biosynthesis; chorismate from D-erythrose 4-phosphate and phosphoenolpyruvate: step 2/7. Its function is as follows. Catalyzes the conversion of 3-deoxy-D-arabino-heptulosonate 7-phosphate (DAHP) to dehydroquinate (DHQ). The sequence is that of 3-dehydroquinate synthase from Blochmanniella pennsylvanica (strain BPEN).